A 368-amino-acid chain; its full sequence is Aminomethyltransferase (368 aa).

This sequence belongs to the GcvT family. As to quaternary structure, the glycine cleavage system is composed of four proteins: P, T, L and H.

It carries out the reaction N(6)-[(R)-S(8)-aminomethyldihydrolipoyl]-L-lysyl-[protein] + (6S)-5,6,7,8-tetrahydrofolate = N(6)-[(R)-dihydrolipoyl]-L-lysyl-[protein] + (6R)-5,10-methylene-5,6,7,8-tetrahydrofolate + NH4(+). The glycine cleavage system catalyzes the degradation of glycine. In Thermoanaerobacter pseudethanolicus (strain ATCC 33223 / 39E) (Clostridium thermohydrosulfuricum), this protein is Aminomethyltransferase.